Here is a 667-residue protein sequence, read N- to C-terminus: Polypeptide N-acetylgalactosaminyltransferase 3 (667 aa).

Residues 1–12 lie on the Cytoplasmic side of the membrane; the sequence is MGLRFQQLKKLW. Residues 13–35 traverse the membrane as a helical; Signal-anchor for type II membrane protein segment; that stretch reads LLYLFLLFFAFFMFAISINLYVA. At 36-667 the chain is on the lumenal side; that stretch reads SIQGGDAEMR…WGFIPLPWRM (632 aa). N-linked (GlcNAc...) asparagine glycosylation is found at asparagine 75 and asparagine 129. 5 disulfide bridges follow: cysteine 140–cysteine 375, cysteine 366–cysteine 446, cysteine 526–cysteine 547, cysteine 572–cysteine 601, and cysteine 626–cysteine 649. Residues 149 to 259 form a catalytic subdomain A region; that stretch reads LPSTSVIIVF…RGWLEPLLSR (111 aa). Substrate contacts are provided by aspartate 190 and arginine 220. 2 residues coordinate Mn(2+): aspartate 243 and histidine 245. 2 N-linked (GlcNAc...) asparagine glycosylation sites follow: asparagine 279 and asparagine 313. The interval 321-383 is catalytic subdomain B; sequence PIATPGMAGG…PCSHVGHVFR (63 aa). A substrate-binding site is contributed by tryptophan 352. Mn(2+) is bound at residue histidine 380. Substrate-binding residues include arginine 383 and tyrosine 388. Asparagine 433 carries an N-linked (GlcNAc...) asparagine glycan. In terms of domain architecture, Ricin B-type lectin spans 513–661; sequence EELMALIDLE…KDITQKWGFI (149 aa). N-linked (GlcNAc...) asparagine glycosylation occurs at asparagine 590.

It belongs to the glycosyltransferase 2 family. GalNAc-T subfamily. Mn(2+) serves as cofactor. Expressed in developing oocytes and egg chambers. During embryonic stages 9-11, expressed in the primordiums of the foregut, midgut and hindgut. During embryonic stages 12-13, expression is found uniquely in the posterior spiracle. During embryonic stages 14-17, expressed in the pharynx, esophagus and posterior spiracles. Expression observed in the epidermis during embryonic stages 16-17. In third instar larvae, expressed ubiquitously in wing, with increased expression in pleura and notum, eye-antennal, leg and haltere imaginal disks.

It localises to the golgi apparatus membrane. It catalyses the reaction L-seryl-[protein] + UDP-N-acetyl-alpha-D-galactosamine = a 3-O-[N-acetyl-alpha-D-galactosaminyl]-L-seryl-[protein] + UDP + H(+). The catalysed reaction is L-threonyl-[protein] + UDP-N-acetyl-alpha-D-galactosamine = a 3-O-[N-acetyl-alpha-D-galactosaminyl]-L-threonyl-[protein] + UDP + H(+). It functions in the pathway protein modification; protein glycosylation. Its function is as follows. Catalyzes the initial reaction in O-linked oligosaccharide biosynthesis, the transfer of an N-acetyl-D-galactosamine residue to a serine or threonine residue on the protein receptor. It can both act as a peptide transferase that transfers GalNAc onto unmodified peptide substrates, and as a glycopeptide transferase that requires the prior addition of a GalNAc on a peptide before adding additional GalNAc moieties. Prefers EA2 as substrate. Has weak activity toward Muc5AC-3, -13 and -3/13 substrates. Plays a critical role in the regulation of integrin-mediated cell adhesion during wing development by influencing, via glycosylation, the secretion and localization of the integrin ligand Tig to the basal cell layer interface. Might have a role in protein O-glycosylation in the Golgi and thereby in establishing and/or maintaining a proper secretory apparatus structure. Together with Pgant35A, regulates integrin levels and activity-dependent integrin signaling at the synapse in neurons and muscles. This chain is Polypeptide N-acetylgalactosaminyltransferase 3, found in Drosophila melanogaster (Fruit fly).